A 699-amino-acid polypeptide reads, in one-letter code: Endogenous retrovirus group K member 113 Env polyprotein (699 aa).

The disordered stretch occupies residues 1-47; the sequence is MNPSEMQRKAPPRRRRHRNRAPLTHKMNKMVTSEEQMKLPSTKKAEP. An N-terminal signal peptide occupies residues 1–89; sequence MNPSEMQRKA…ALMIVSMVVS (89 aa). Residues 10-20 show a composition bias toward basic residues; the sequence is APPRRRRHRNR. The Extracellular portion of the chain corresponds to 90 to 632; the sequence is LPMPAGAAAA…NLNPVTWVKT (543 aa). N-linked (GlcNAc...) asparagine glycans are attached at residues N100, N128, N153, N274, N355, N372, and N461. A fusion peptide region spans residues 466–486; sequence FIFTLIAVIMGLIAVTATAAV. N507, N554, N566, and N585 each carry an N-linked (GlcNAc...) asparagine glycan. A helical membrane pass occupies residues 633-653; sequence IGSTTIINLILILVCLFCLLL. At 654-699 the chain is on the cytoplasmic side; the sequence is VCRCTQQLRRDSDHRERAMMTMAVLSKRKGGNVGKSKRDQIVTVSV.

The protein belongs to the beta type-B retroviral envelope protein family. HERV class-II K(HML-2) env subfamily. In terms of assembly, the surface (SU) and transmembrane (TM) proteins form a heterodimer. SU and TM are attached by noncovalent interactions or by a labile interchain disulfide bond. Specific enzymatic cleavages in vivo yield the mature SU and TM proteins.

Its subcellular location is the cell membrane. It localises to the virion. Its function is as follows. Retroviral envelope proteins mediate receptor recognition and membrane fusion during early infection. Endogenous envelope proteins may have kept, lost or modified their original function during evolution. This endogenous envelope protein has lost its original fusogenic properties. Functionally, SU mediates receptor recognition. In terms of biological role, TM anchors the envelope heterodimer to the viral membrane through one transmembrane domain. The other hydrophobic domain, called fusion peptide, mediates fusion of the viral membrane with the target cell membrane. The chain is Endogenous retrovirus group K member 113 Env polyprotein (HERVK_113) from Homo sapiens (Human).